We begin with the raw amino-acid sequence, 1021 residues long: Ribosome quality control complex subunit 2 (1021 aa).

Residues 348–388 are a coiled coil; it reads IEAQKLKKRAHDRLATAERRLESAKEDQARKLQSLQDAQAT. Residues 457 to 484 are disordered; that stretch reads NPESVDNSDESSETSDDDLDDSDDDNKV. The segment covering 462-480 has biased composition (acidic residues); it reads DNSDESSETSDDDLDDSDD. Serine 478 is modified (phosphoserine). Coiled-coil stretches lie at residues 507-546 and 698-727; these read NARK…DLKR and DEKS…LKME. Polar residues-rich tracts occupy residues 746–761 and 839–856; these read YNED…TTGS and ISSQ…TPTA. Disordered stretches follow at residues 746 to 801 and 832 to 905; these read YNED…TALE and HAAR…VESF. Basic and acidic residues predominate over residues 876-905; the sequence is DQSRNSEAENEKGLSTEQRDEKKHAKVESF.

It belongs to the NEMF family. Component of the ribosome quality control complex (RQC), composed of the E3 ubiquitin ligase rkr1/ltn1, rqc1 and mtr1/rqc2, as well as cdc48 and its ubiquitin-binding cofactors associated with the 60S ribosomal subunit. RQC2 binds to the 40S-binding surface of tRNAs.

It is found in the cytoplasm. Functionally, key component of the ribosome quality control complex (RQC), a ribosome-associated complex that mediates the extraction of incompletely synthesized nascent chains from stalled ribosomes as well as their ubiquitin-mediated proteasomal degradation. Thereby, frees 60S subunit ribosomes from the stalled translation complex and prevents the accumulation of nascent polypeptide chains that are potentially toxic for the cell. Within the RQC complex, mtr1/rqc2 specifically binds stalled 60S ribosomal subunits by recognizing an exposed, nascent chain-conjugated tRNA moiety and promotes the recruitment of rkr1/ltn1 to stalled 60S subunits. Following binding to stalled 60S ribosomal subunits, mtr1/rqc2 mediates CAT tailing by recruiting alanine- and threonine-charged tRNA to the A-site and directing the elongation of stalled nascent chains independently of mRNA or 40S subunits, leading to non-templated C-terminal Ala and Thr extensions (CAT tails). CAT tails promote the rkr1/ltn1-mediated ubiquitination of incompletely synthesized nascent polypeptides: CAT tailing facilitates rkr1/ltn1-dependent ubiquitination by exposing lysine residues that would otherwise remain buried in the ribosomal exit tunnel. Following ubiquitination, incompletely synthesized nascent polypeptides are recognized by CDC48 and degraded by the proteasome. CAT-tailed proteins tend to aggregate and sequester chaperones and can induce proteotoxic stress; their rkr1/ltn1-dependent ubiquitination and degradation is required to prevent proteotoxic stress. The protein is Ribosome quality control complex subunit 2 of Schizosaccharomyces pombe (strain 972 / ATCC 24843) (Fission yeast).